The following is a 388-amino-acid chain: Chorismate synthase (388 aa).

Residues R39 and R45 each contribute to the NADP(+) site. FMN is bound by residues 132-134 (RSS), 251-252 (NA), G296, 311-315 (KPIPT), and R337.

This sequence belongs to the chorismate synthase family. In terms of assembly, homotetramer. FMNH2 is required as a cofactor.

The enzyme catalyses 5-O-(1-carboxyvinyl)-3-phosphoshikimate = chorismate + phosphate. It participates in metabolic intermediate biosynthesis; chorismate biosynthesis; chorismate from D-erythrose 4-phosphate and phosphoenolpyruvate: step 7/7. In terms of biological role, catalyzes the anti-1,4-elimination of the C-3 phosphate and the C-6 proR hydrogen from 5-enolpyruvylshikimate-3-phosphate (EPSP) to yield chorismate, which is the branch point compound that serves as the starting substrate for the three terminal pathways of aromatic amino acid biosynthesis. This reaction introduces a second double bond into the aromatic ring system. The polypeptide is Chorismate synthase (Staphylococcus haemolyticus (strain JCSC1435)).